A 549-amino-acid polypeptide reads, in one-letter code: Glucose-6-phosphate isomerase (549 aa).

Glutamate 355 serves as the catalytic Proton donor. Residues histidine 386 and lysine 514 contribute to the active site.

Belongs to the GPI family.

It is found in the cytoplasm. It catalyses the reaction alpha-D-glucose 6-phosphate = beta-D-fructose 6-phosphate. The protein operates within carbohydrate biosynthesis; gluconeogenesis. It functions in the pathway carbohydrate degradation; glycolysis; D-glyceraldehyde 3-phosphate and glycerone phosphate from D-glucose: step 2/4. Its function is as follows. Catalyzes the reversible isomerization of glucose-6-phosphate to fructose-6-phosphate. The polypeptide is Glucose-6-phosphate isomerase (Salmonella gallinarum (strain 287/91 / NCTC 13346)).